The primary structure comprises 566 residues: Glucose-6-phosphate isomerase (566 aa).

Glutamate 374 serves as the catalytic Proton donor. Residues histidine 405 and lysine 529 contribute to the active site.

It belongs to the GPI family.

It localises to the cytoplasm. The catalysed reaction is alpha-D-glucose 6-phosphate = beta-D-fructose 6-phosphate. Its pathway is carbohydrate biosynthesis; gluconeogenesis. It participates in carbohydrate degradation; glycolysis; D-glyceraldehyde 3-phosphate and glycerone phosphate from D-glucose: step 2/4. Its function is as follows. Catalyzes the reversible isomerization of glucose-6-phosphate to fructose-6-phosphate. The polypeptide is Glucose-6-phosphate isomerase (Bifidobacterium longum (strain NCC 2705)).